A 415-amino-acid chain; its full sequence is Pectin acetylesterase 12 (415 aa).

The first 20 residues, 1 to 20 (MVKLLLVGFVVAGIILGTQA), serve as a signal peptide directing secretion. An N-linked (GlcNAc...) asparagine glycan is attached at Asn-27. Catalysis depends on charge relay system residues Ser-197, Asp-293, and His-360.

The protein belongs to the pectinacetylesterase family.

The protein resides in the secreted. Its subcellular location is the cell wall. Functionally, hydrolyzes acetyl esters in homogalacturonan regions of pectin. In type I primary cell wall, galacturonic acid residues of pectin can be acetylated at the O-2 and O-3 positions. Decreasing the degree of acetylation of pectin gels in vitro alters their physical properties. This chain is Pectin acetylesterase 12, found in Arabidopsis thaliana (Mouse-ear cress).